A 250-amino-acid polypeptide reads, in one-letter code: Uridylate kinase (250 aa).

19–22 (KLSG) serves as a coordination point for ATP. G61 is a UMP binding site. Residues G62 and R66 each contribute to the ATP site. UMP contacts are provided by residues D81 and 142–149 (TGNPFFTT). Residues T169, Q170, Y175, and D178 each contribute to the ATP site.

It belongs to the UMP kinase family. Homohexamer.

It is found in the cytoplasm. It carries out the reaction UMP + ATP = UDP + ADP. The protein operates within pyrimidine metabolism; CTP biosynthesis via de novo pathway; UDP from UMP (UMPK route): step 1/1. With respect to regulation, inhibited by UTP. Catalyzes the reversible phosphorylation of UMP to UDP. The sequence is that of Uridylate kinase from Rhodospirillum rubrum (strain ATCC 11170 / ATH 1.1.1 / DSM 467 / LMG 4362 / NCIMB 8255 / S1).